Here is a 383-residue protein sequence, read N- to C-terminus: La protein homolog (383 aa).

The segment at 1-43 is disordered; that stretch reads MTEVEAKATATEETTKEEEEAPETTAEQTEESAQETSENVSKL. The span at 15 to 33 shows a compositional bias: acidic residues; the sequence is TKEEEEAPETTAEQTEESA. Positions 37-129 constitute an HTH La-type RNA-binding domain; that stretch reads SENVSKLEAS…RRHPERPLPE (93 aa). Positions 141–228 constitute an RRM domain; the sequence is RTVYVKGFAP…RKMQDDYFEE (88 aa). The xRRM domain occupies 249–368; that stretch reads HLPKGASVHL…RTPEGRQASR (120 aa). Residues 343 to 383 are disordered; sequence KDQQARRQASNARNKGRTPEGRQASRPPQEWRRKAKGGRGE.

Its subcellular location is the nucleus. It is found in the cytoplasm. Its function is as follows. May be involved in transcription termination by RNA polymerase III. Binds RNA and DNA. Binds to the 3' end of the minus strand of Sindbis virus RNA. This may be significant for Sindbis virus RNA replication. The protein is La protein homolog of Aedes albopictus (Asian tiger mosquito).